Reading from the N-terminus, the 417-residue chain is UDP-N-acetylglucosamine 1-carboxyvinyltransferase (417 aa).

22–23 is a binding site for phosphoenolpyruvate; that stretch reads KN. Arginine 93 lines the UDP-N-acetyl-alpha-D-glucosamine pocket. Cysteine 117 (proton donor) is an active-site residue. At cysteine 117 the chain carries 2-(S-cysteinyl)pyruvic acid O-phosphothioketal. Residues 122–126, aspartate 304, and isoleucine 326 each bind UDP-N-acetyl-alpha-D-glucosamine; that span reads RPVDQ.

This sequence belongs to the EPSP synthase family. MurA subfamily.

Its subcellular location is the cytoplasm. It carries out the reaction phosphoenolpyruvate + UDP-N-acetyl-alpha-D-glucosamine = UDP-N-acetyl-3-O-(1-carboxyvinyl)-alpha-D-glucosamine + phosphate. Its pathway is cell wall biogenesis; peptidoglycan biosynthesis. Its function is as follows. Cell wall formation. Adds enolpyruvyl to UDP-N-acetylglucosamine. This Laribacter hongkongensis (strain HLHK9) protein is UDP-N-acetylglucosamine 1-carboxyvinyltransferase.